The primary structure comprises 220 residues: Fructose-6-phosphate aldolase 2 (220 aa).

The Schiff-base intermediate with substrate role is filled by K85.

This sequence belongs to the transaldolase family. Type 3A subfamily. Homodecamer.

It is found in the cytoplasm. The enzyme catalyses beta-D-fructose 6-phosphate = dihydroxyacetone + D-glyceraldehyde 3-phosphate. Functionally, catalyzes the reversible formation of fructose 6-phosphate from dihydroxyacetone and D-glyceraldehyde 3-phosphate via an aldolization reaction. In Escherichia coli O6:H1 (strain CFT073 / ATCC 700928 / UPEC), this protein is Fructose-6-phosphate aldolase 2 (fsaB).